We begin with the raw amino-acid sequence, 185 residues long: UPF0301 protein IL2218 (185 aa).

Belongs to the UPF0301 (AlgH) family.

The polypeptide is UPF0301 protein IL2218 (Idiomarina loihiensis (strain ATCC BAA-735 / DSM 15497 / L2-TR)).